A 387-amino-acid polypeptide reads, in one-letter code: uncharacterized protein (387 aa).

The tract at residues 1–23 is disordered; sequence MSSLPRNAVARNSKMHKKRDSGV. A coiled-coil region spans residues 98-129; it reads KIARDLKKRQEDYEKTKLEVERLKRSEELANK. Residues 146-255 are disordered; the sequence is ENNTVEPNNE…NKKKKKEKNK (110 aa). Composition is skewed to low complexity over residues 162–175 and 182–194; these read EQIT…TTEQ and EQTT…QTAE. Residues 204-213 are compositionally biased toward basic and acidic residues; the sequence is TVEKSGDQST. The span at 214–231 shows a compositional bias: polar residues; the sequence is EKTTQQTAEESVEQSTEQ.

This is an uncharacterized protein from Acanthamoeba polyphaga mimivirus (APMV).